Reading from the N-terminus, the 136-residue chain is Histone H3.3C (136 aa).

The segment covering 1–10 has biased composition (polar residues); sequence MALTKQTARK. A disordered region spans residues 1-44; the sequence is MALTKQTARKSTGGKAPRKQLATKATRKSAPSTGGVKKPHRYRP. T4 carries the post-translational modification Phosphothreonine; by HASPIN. At K5 the chain carries Allysine; alternate. K5 is modified (N6,N6,N6-trimethyllysine; alternate). Position 5 is an N6,N6-dimethyllysine; alternate (K5). Residue K5 is modified to N6-(2-hydroxyisobutyryl)lysine; alternate. Position 5 is an N6-(beta-hydroxybutyryl)lysine; alternate (K5). Position 5 is an N6-acetyllysine; alternate (K5). The residue at position 5 (K5) is an N6-methyllysine; alternate. The residue at position 6 (Q6) is a 5-glutamyl dopamine; alternate. Q6 bears the 5-glutamyl serotonin; alternate mark. T7 is subject to Phosphothreonine; by PKC. Residue R9 is modified to Citrulline; alternate. The residue at position 9 (R9) is a Symmetric dimethylarginine; by PRMT5; alternate. The residue at position 10 (K10) is an N6,N6,N6-trimethyllysine; alternate. K10 carries the N6,N6-dimethyllysine; alternate modification. The residue at position 10 (K10) is an N6-(2-hydroxyisobutyryl)lysine; alternate. N6-(beta-hydroxybutyryl)lysine; alternate is present on K10. An N6-acetyllysine; alternate modification is found at K10. K10 carries the N6-methyllysine; alternate modification. The residue at position 10 (K10) is an N6-lactoyllysine; alternate. S11 is subject to ADP-ribosylserine; alternate. S11 carries the phosphoserine; alternate; by AURKB, AURKC, RPS6KA3, RPS6KA4 and RPS6KA5 modification. A Phosphothreonine; by PKC modification is found at T12. Position 15 is an N6-(2-hydroxyisobutyryl)lysine; alternate (K15). K15 is modified (N6-(beta-hydroxybutyryl)lysine; alternate). Residue K15 is modified to N6-acetyllysine; alternate. An N6-lactoyllysine; alternate modification is found at K15. K15 carries the N6-glutaryllysine; alternate modification. K15 bears the N6-succinyllysine; alternate mark. Citrulline; alternate is present on R18. An Asymmetric dimethylarginine; by CARM1; alternate modification is found at R18. N6-(2-hydroxyisobutyryl)lysine; alternate occurs at positions 19 and 24. An N6-(beta-hydroxybutyryl)lysine; alternate mark is found at K19 and K24. Residues K19 and K24 each carry the N6-acetyllysine; alternate modification. N6-methyllysine; alternate occurs at positions 19 and 24. 2 positions are modified to N6-lactoyllysine; alternate: K19 and K24. 2 positions are modified to N6-glutaryllysine; alternate: K19 and K24. K19 and K24 each carry N6-butyryllysine; alternate. R27 is modified (citrulline). K28 carries the post-translational modification N6,N6,N6-trimethyllysine; alternate. The residue at position 28 (K28) is an N6,N6-dimethyllysine; alternate. K28 is subject to N6-(2-hydroxyisobutyryl)lysine; alternate. K28 carries the N6-acetyllysine; alternate modification. K28 bears the N6-methyllysine; alternate mark. K28 carries the post-translational modification N6-lactoyllysine; alternate. K28 carries the N6-glutaryllysine; alternate modification. S29 is modified (ADP-ribosylserine; alternate). S29 is subject to Phosphoserine; alternate; by AURKB, AURKC and RPS6KA5. A Phosphoserine modification is found at S32. The residue at position 37 (K37) is an N6,N6,N6-trimethyllysine; alternate. N6,N6-dimethyllysine; alternate is present on K37. K37 bears the N6-(2-hydroxyisobutyryl)lysine; alternate mark. At K37 the chain carries N6-acetyllysine; alternate. Position 37 is an N6-methyllysine; alternate (K37). K38 is subject to N6-methyllysine. Y42 carries the post-translational modification Phosphotyrosine. K57 is modified (N6,N6,N6-trimethyllysine; alternate). K57 carries the post-translational modification N6-(2-hydroxyisobutyryl)lysine; alternate. K57 bears the N6-(beta-hydroxybutyryl)lysine; alternate mark. K57 carries the post-translational modification N6-acetyllysine; alternate. At K57 the chain carries N6-lactoyllysine; alternate. Residue K57 is modified to N6-glutaryllysine; alternate. N6-succinyllysine; alternate is present on K57. K57 carries the post-translational modification N6-methyllysine; by EHMT2; alternate. A Phosphoserine modification is found at S58. 2 positions are modified to N6-(2-hydroxyisobutyryl)lysine; alternate: K65 and K80. K65 and K80 each carry N6-methyllysine; alternate. K80 carries the N6,N6,N6-trimethyllysine; alternate modification. The residue at position 80 (K80) is an N6,N6-dimethyllysine; alternate. K80 carries the post-translational modification N6-acetyllysine; alternate. K80 is modified (N6-lactoyllysine; alternate). K80 bears the N6-glutaryllysine; alternate mark. An N6-succinyllysine; alternate modification is found at K80. Position 81 is a phosphothreonine (T81). Position 87 is a phosphoserine (S87). Position 108 is a phosphothreonine (T108). An N6-acetyllysine; alternate mark is found at K116 and K123. N6-glutaryllysine; alternate occurs at positions 116 and 123. K123 carries the N6-(2-hydroxyisobutyryl)lysine; alternate modification. The residue at position 123 (K123) is an N6-methyllysine; alternate. K123 bears the N6-succinyllysine; alternate mark.

It belongs to the histone H3 family. The nucleosome is a histone octamer containing two molecules each of H2A, H2B, H3 and H4 assembled in one H3-H4 heterotetramer and two H2A-H2B heterodimers. The octamer wraps approximately 147 bp of DNA. In terms of processing, acetylation is generally linked to gene activation. Acetylation on Lys-10 (H3K9ac) impairs methylation at Arg-9 (H3R8me2s). Acetylation on Lys-19 (H3K18ac) and Lys-24 (H3K24ac) favors methylation at Arg-18 (H3R17me). Acetylation at Lys-123 (H3K122ac) by EP300/p300 plays a central role in chromatin structure: localizes at the surface of the histone octamer and stimulates transcription, possibly by promoting nucleosome instability. Post-translationally, citrullination at Arg-9 (H3R8ci) and/or Arg-18 (H3R17ci) by PADI4 impairs methylation and represses transcription. Butyrylation of histones marks active promoters and competes with histone acetylation. It is present during late spermatogenesis. In terms of processing, asymmetric dimethylation at Arg-18 (H3R17me2a) by CARM1 is linked to gene activation. Symmetric dimethylation at Arg-9 (H3R8me2s) by PRMT5 is linked to gene repression. Post-translationally, methylation at Lys-5 (H3K4me), Lys-37 and Lys-80 are linked to gene activation. Methylation at Lys-5 (H3K4me) facilitates subsequent acetylation of H3 and H4. Methylation at Lys-80 is associated with DNA double-strand break (DSB) responses and is a specific target for TP53BP1. Methylation at Lys-10 (H3K9me) and Lys-28 (H3K27me) are linked to gene repression. Methylation at Lys-10 (H3K9me) is a specific target for HP1 proteins (CBX1, CBX3 and CBX5) and prevents subsequent phosphorylation at Ser-11 (H3S10ph) and acetylation of H3 and H4. Methylation at Lys-5 (H3K4me) and Lys-80 require preliminary monoubiquitination of H2B at 'Lys-120'. Methylation at Lys-10 (H3K9me) and Lys-28 (H3K27me) are enriched in inactive X chromosome chromatin. Monomethylation at Lys-57 (H3K56me1) by EHMT2/G9A in G1 phase promotes interaction with PCNA and is required for DNA replication. Phosphorylated at Thr-4 (H3T3ph) by HASPIN during prophase and dephosphorylated during anaphase. Phosphorylation at Ser-11 (H3S10ph) by AURKB is crucial for chromosome condensation and cell-cycle progression during mitosis and meiosis. In addition phosphorylation at Ser-11 (H3S10ph) by RPS6KA4 and RPS6KA5 is important during interphase because it enables the transcription of genes following external stimulation, like mitogens, stress, growth factors or UV irradiation and result in the activation of genes, such as c-fos and c-jun. Phosphorylation at Ser-11 (H3S10ph), which is linked to gene activation, prevents methylation at Lys-10 (H3K9me) but facilitates acetylation of H3 and H4. Phosphorylation at Ser-11 (H3S10ph) by AURKB mediates the dissociation of HP1 proteins (CBX1, CBX3 and CBX5) from heterochromatin. Phosphorylation at Ser-11 (H3S10ph) is also an essential regulatory mechanism for neoplastic cell transformation. Phosphorylated at Ser-29 (H3S28ph) by MAP3K20 isoform 1, RPS6KA5 or AURKB during mitosis or upon ultraviolet B irradiation. Phosphorylation at Thr-7 (H3T6ph) by PRKCB is a specific tag for epigenetic transcriptional activation that prevents demethylation of Lys-5 (H3K4me) by LSD1/KDM1A. At centromeres, specifically phosphorylated at Thr-12 (H3T11ph) from prophase to early anaphase, by DAPK3 and PKN1. Phosphorylation at Thr-12 (H3T11ph) by PKN1 or isoform M2 of PKM (PKM2) is a specific tag for epigenetic transcriptional activation that promotes demethylation of Lys-10 (H3K9me) by KDM4C/JMJD2C. Phosphorylation at Tyr-42 (H3Y41ph) by JAK2 promotes exclusion of CBX5 (HP1 alpha) from chromatin. In terms of processing, lysine deamination at Lys-5 (H3K4all) to form allysine is mediated by LOXL2. Allysine formation by LOXL2 only takes place on H3K4me3 and results in gene repression. Post-translationally, succinylation at Lys-80 (H3K79succ) by KAT2A takes place with a maximum frequency around the transcription start sites of genes. It gives a specific tag for epigenetic transcription activation. Desuccinylation at Lys-123 (H3K122succ) by SIRT7 in response to DNA damage promotes chromatin condensation and double-strand breaks (DSBs) repair. Serine ADP-ribosylation constitutes the primary form of ADP-ribosylation of proteins in response to DNA damage. Serine ADP-ribosylation at Ser-11 (H3S10ADPr) is mutually exclusive with phosphorylation at Ser-11 (H3S10ph) and impairs acetylation at Lys-10 (H3K9ac).

It is found in the nucleus. The protein resides in the chromosome. Functionally, core component of nucleosome. Nucleosomes wrap and compact DNA into chromatin, limiting DNA accessibility to the cellular machineries which require DNA as a template. Histones thereby play a central role in transcription regulation, DNA repair, DNA replication and chromosomal stability. DNA accessibility is regulated via a complex set of post-translational modifications of histones, also called histone code, and nucleosome remodeling. In Mus musculus (Mouse), this protein is Histone H3.3C.